The following is a 96-amino-acid chain: UPF0235 protein Acid345_4205 (96 aa).

The protein belongs to the UPF0235 family.

This is UPF0235 protein Acid345_4205 from Koribacter versatilis (strain Ellin345).